Consider the following 179-residue polypeptide: ATP synthase subunit b (179 aa).

The chain crosses the membrane as a helical span at residues 23-43; sequence IFWLIITFGILYVVLSKLILP.

The protein belongs to the ATPase B chain family. As to quaternary structure, F-type ATPases have 2 components, F(1) - the catalytic core - and F(0) - the membrane proton channel. F(1) has five subunits: alpha(3), beta(3), gamma(1), delta(1), epsilon(1). F(0) has three main subunits: a(1), b(2) and c(10-14). The alpha and beta chains form an alternating ring which encloses part of the gamma chain. F(1) is attached to F(0) by a central stalk formed by the gamma and epsilon chains, while a peripheral stalk is formed by the delta and b chains.

The protein resides in the cell inner membrane. Functionally, f(1)F(0) ATP synthase produces ATP from ADP in the presence of a proton or sodium gradient. F-type ATPases consist of two structural domains, F(1) containing the extramembraneous catalytic core and F(0) containing the membrane proton channel, linked together by a central stalk and a peripheral stalk. During catalysis, ATP synthesis in the catalytic domain of F(1) is coupled via a rotary mechanism of the central stalk subunits to proton translocation. In terms of biological role, component of the F(0) channel, it forms part of the peripheral stalk, linking F(1) to F(0). The polypeptide is ATP synthase subunit b (Pelagibacter ubique (strain HTCC1062)).